The chain runs to 150 residues: Large ribosomal subunit protein uL15 (150 aa).

The segment at 1-57 is disordered; sequence MRLEDIRPQAGSTRRRRRLGRGVSAGQGASCGKGMRGQKARKGGSTRPGFEGGQTPL. Positions 23–35 are enriched in gly residues; that stretch reads VSAGQGASCGKGM.

The protein belongs to the universal ribosomal protein uL15 family. Part of the 50S ribosomal subunit.

Binds to the 23S rRNA. The sequence is that of Large ribosomal subunit protein uL15 from Synechococcus sp. (strain JA-2-3B'a(2-13)) (Cyanobacteria bacterium Yellowstone B-Prime).